A 570-amino-acid polypeptide reads, in one-letter code: Formate--tetrahydrofolate ligase (570 aa).

65 to 72 (TPHGEGKT) is a binding site for ATP.

This sequence belongs to the formate--tetrahydrofolate ligase family.

The enzyme catalyses (6S)-5,6,7,8-tetrahydrofolate + formate + ATP = (6R)-10-formyltetrahydrofolate + ADP + phosphate. It participates in one-carbon metabolism; tetrahydrofolate interconversion. The protein is Formate--tetrahydrofolate ligase of Shewanella oneidensis (strain ATCC 700550 / JCM 31522 / CIP 106686 / LMG 19005 / NCIMB 14063 / MR-1).